We begin with the raw amino-acid sequence, 511 residues long: Acetylcholine receptor subunit alpha-type unc-38 (511 aa).

The signal sequence occupies residues 1-16; it reads MRSFWLFLLLLLFCIS. Topologically, residues 17–261 are extracellular; it reads FIKLTEGNED…QLRRKPLFYT (245 aa). Asparagine 124 is a glycosylation site (N-linked (GlcNAc...) asparagine). A disulfide bond links cysteine 151 and cysteine 165. Asparagine 202 carries N-linked (GlcNAc...) asparagine glycosylation. Residues cysteine 238 and cysteine 239 are joined by a disulfide bond. A run of 3 helical transmembrane segments spans residues 262 to 282, 291 to 311, and 324 to 344; these read VNLVFPCVGISFLTILVFYLP, LCISILVALTIFFLLLTEIIP, and LLFTMVMVTLSVVVTVISLNL. The Cytoplasmic segment spans residues 345 to 464; sequence HFRTPTTHLM…WKYVAMVLDR (120 aa). Residues 465-485 form a helical membrane-spanning segment; it reads LFLLIFSIACFVGTVIILLRA.

This sequence belongs to the ligand-gated ion channel (TC 1.A.9) family. Acetylcholine receptor (TC 1.A.9.1) subfamily. Component of nicotinic acetylcholine receptor. In muscles, composed of 2 non-alpha subunits lev-1 and unc-29, and 3 alpha subunits unc-38, unc-63 and lev-8. In cholinergic motoneurons, composed of 2 non-alpha subunits acr-2 and acr-3, and 3 alpha subunits unc-38, unc-63 and acr-12.

The protein resides in the postsynaptic cell membrane. It is found in the cell membrane. Alpha subunit of nicotinic acetylcholine receptor (nAChR). Probably acts in cholinergic motoneurons to regulate presynaptic neurotransmitter release, thereby ensuring normal level of excitation of cholinergic motoneurons during locomotion. Involved in nAChR sensitivity to nicotine. This Caenorhabditis elegans protein is Acetylcholine receptor subunit alpha-type unc-38 (unc-38).